Consider the following 343-residue polypeptide: MTPHLALCFILLIQQVASQKCPSQCDQCPEEPPSCAPSVLLILDGCGCCPVCARQEGESCSHLNPCQEDKGLYCEFNADPRMETGTCMALEGNSCVFDGVVYRNRESFQPSCKYHCTCLNGHIGCVPRCNLDLLLPGPDCPFPRRVKVPGECCEKWVCDSKEEMAIGGFAMAAYRPEATLGIDASDTSFACIAQTTEWSACSKTCGMGVSSRVTNRNARCEMQKQIRLCMVRSCEEEPGWHVEKKGKKCVRVRKTTKPIHFHYKNCTSVQPYKPKFCGQCSDGRCCTPHSTKTMHVEFVCPQKRIVKKPVMVISTCVCHYNCPQDSSLLQVENARFPGLKTNL.

The first 18 residues, 1-18, serve as a signal peptide directing secretion; it reads MTPHLALCFILLIQQVAS. Positions 19–90 constitute an IGFBP N-terminal domain; it reads QKCPSQCDQC…RMETGTCMAL (72 aa). 6 cysteine pairs are disulfide-bonded: Cys-21/Cys-46, Cys-25/Cys-48, Cys-28/Cys-49, Cys-35/Cys-52, Cys-60/Cys-74, and Cys-66/Cys-87. In terms of domain architecture, VWFC spans 93 to 159; sequence NSCVFDGVVY…GECCEKWVCD (67 aa). One can recognise a TSP type-1 domain in the interval 190-235; that stretch reads ACIAQTTEWSACSKTCGMGVSSRVTNRNARCEMQKQIRLCMVRSCE. Intrachain disulfides connect Cys-249/Cys-286, Cys-266/Cys-300, Cys-277/Cys-316, Cys-280/Cys-318, and Cys-285/Cys-322. Positions 249–323 constitute a CTCK domain; that stretch reads CVRVRKTTKP…STCVCHYNCP (75 aa). An N-linked (GlcNAc...) asparagine glycan is attached at Asn-265.

It belongs to the CCN family.

The protein resides in the secreted. Its subcellular location is the cytoplasm. It localises to the cell junction. The protein localises to the gap junction. Its function is as follows. Immediate-early protein playing a role in various cellular processes including proliferation, adhesion, migration, differentiation and survival. Acts by binding to integrins or membrane receptors such as NOTCH1. This chain is CCN family member 3 (ccn3), found in Xenopus laevis (African clawed frog).